The sequence spans 198 residues: Pyridoxal 5'-phosphate synthase subunit PdxT (198 aa).

52 to 54 (GES) contributes to the L-glutamine binding site. Residue cysteine 84 is the Nucleophile of the active site. L-glutamine-binding positions include arginine 115 and 143-144 (IR). Active-site charge relay system residues include histidine 179 and glutamate 181.

Belongs to the glutaminase PdxT/SNO family. In the presence of PdxS, forms a dodecamer of heterodimers. Only shows activity in the heterodimer.

The enzyme catalyses aldehydo-D-ribose 5-phosphate + D-glyceraldehyde 3-phosphate + L-glutamine = pyridoxal 5'-phosphate + L-glutamate + phosphate + 3 H2O + H(+). It carries out the reaction L-glutamine + H2O = L-glutamate + NH4(+). It participates in cofactor biosynthesis; pyridoxal 5'-phosphate biosynthesis. Functionally, catalyzes the hydrolysis of glutamine to glutamate and ammonia as part of the biosynthesis of pyridoxal 5'-phosphate. The resulting ammonia molecule is channeled to the active site of PdxS. The protein is Pyridoxal 5'-phosphate synthase subunit PdxT of Methanococcoides burtonii (strain DSM 6242 / NBRC 107633 / OCM 468 / ACE-M).